The chain runs to 66 residues: UPF0337 protein SAG0619 (66 aa).

The segment at 1-22 (MSQEKLKSKLDQAKGGAKEGFG) is disordered.

The protein belongs to the UPF0337 (CsbD) family.

The sequence is that of UPF0337 protein SAG0619 from Streptococcus agalactiae serotype V (strain ATCC BAA-611 / 2603 V/R).